Here is a 372-residue protein sequence, read N- to C-terminus: F-box protein AFR (372 aa).

Polar residues predominate over residues 1–15 (MAEQETTSNINTIND). The disordered stretch occupies residues 1-27 (MAEQETTSNINTINDQAEEETRTKSQP). The F-box domain occupies 29-74 (ISGLPNDIAELCLLRLPYPYHALYRSVSSSWNKTITNPRFLFSKQS). 5 Kelch repeats span residues 80 to 126 (PYLF…HALS), 135 to 178 (KLFV…NVNG), 179 to 227 (KIMA…VIGK), 229 to 276 (MCVT…IRDR), and 279 to 325 (VISE…DRVF).

As to quaternary structure, part of a SCF (ASK-cullin-F-box) protein ligase complex. Interacts with SKP1A.

The protein operates within protein modification; protein ubiquitination. Functionally, component of SCF (ASK-cullin-F-box) E3 ubiquitin ligase complexes, which may mediate the ubiquitination and subsequent proteasomal degradation of target proteins. Part of the phyA-mediated signaling transduction pathway leading to the regulation of gene expression and hypocotyls elongation in response to red and far-red light exposure. In Arabidopsis thaliana (Mouse-ear cress), this protein is F-box protein AFR (AFR).